Consider the following 305-residue polypeptide: tRNA dimethylallyltransferase (305 aa).

9-16 contributes to the ATP binding site; sequence GPTGAGKT. 11 to 16 serves as a coordination point for substrate; the sequence is TGAGKT. Interaction with substrate tRNA stretches follow at residues 34-37 and 158-162; these read DSRQ and QRIVR.

Belongs to the IPP transferase family. Monomer. Mg(2+) serves as cofactor.

It carries out the reaction adenosine(37) in tRNA + dimethylallyl diphosphate = N(6)-dimethylallyladenosine(37) in tRNA + diphosphate. Catalyzes the transfer of a dimethylallyl group onto the adenine at position 37 in tRNAs that read codons beginning with uridine, leading to the formation of N6-(dimethylallyl)adenosine (i(6)A). This chain is tRNA dimethylallyltransferase, found in Oleidesulfovibrio alaskensis (strain ATCC BAA-1058 / DSM 17464 / G20) (Desulfovibrio alaskensis).